Consider the following 715-residue polypeptide: Polyribonucleotide nucleotidyltransferase (715 aa).

Mg(2+) contacts are provided by aspartate 489 and aspartate 495. The KH domain occupies 556-615 (PRIETLRIPTEKIREVIGTGGKVIREICEKTGAKINIEDDGTVKVASSDGNSIKAAINWI). The S1 motif domain maps to 625 to 693 (GHIYDGTVVK…DRGKVRLSMR (69 aa)).

It belongs to the polyribonucleotide nucleotidyltransferase family. Mg(2+) serves as cofactor.

It is found in the cytoplasm. It catalyses the reaction RNA(n+1) + phosphate = RNA(n) + a ribonucleoside 5'-diphosphate. Its function is as follows. Involved in mRNA degradation. Catalyzes the phosphorolysis of single-stranded polyribonucleotides processively in the 3'- to 5'-direction. In Beijerinckia indica subsp. indica (strain ATCC 9039 / DSM 1715 / NCIMB 8712), this protein is Polyribonucleotide nucleotidyltransferase.